Here is a 275-residue protein sequence, read N- to C-terminus: MHSSPSAGKQRVALVMQYLGTHFHGWQRQPNFSSIQEEVELAIAKVVGQPVTLHGAGRTDAGVHAAAQVAHFDDPVGQIPPHRWSKILNGHLPQDIIVRGSAAVDSHWHARFSALWRRYRYSIYTDQWPNLFADQFSWHYYRFPLQEKTIQAAMEPLLGKHHLAAFHRAGSARRHSWVEVQGVECYRRGPMVYLEIQANGFLYGMVRLLVGMLAEVGSGQRSLTDFNDIWVNQRRDLVKYAAPAKGLCLLRVGYENFPLPDSLWFDSQPLWQFTG.

The active-site Nucleophile is aspartate 60. A substrate-binding site is contributed by tyrosine 119.

The protein belongs to the tRNA pseudouridine synthase TruA family. In terms of assembly, homodimer.

The catalysed reaction is uridine(38/39/40) in tRNA = pseudouridine(38/39/40) in tRNA. Formation of pseudouridine at positions 38, 39 and 40 in the anticodon stem and loop of transfer RNAs. This Synechocystis sp. (strain ATCC 27184 / PCC 6803 / Kazusa) protein is tRNA pseudouridine synthase A.